Consider the following 145-residue polypeptide: Mini-ribonuclease 3 (145 aa).

Asp27 is an active-site residue.

It belongs to the MrnC RNase family. In terms of assembly, homodimer. Requires Mg(2+) as cofactor.

The protein resides in the cytoplasm. Its function is as follows. Involved in correct processing of both the 5' and 3' ends of 23S rRNA precursor. Processes 30S rRNA precursor transcript even in absence of ribonuclease 3 (Rnc); Rnc processes 30S rRNA into smaller rRNA precursors. The polypeptide is Mini-ribonuclease 3 (Kosmotoga olearia (strain ATCC BAA-1733 / DSM 21960 / TBF 19.5.1)).